Here is a 106-residue protein sequence, read N- to C-terminus: Probable insulin-like peptide beta-type 2 (106 aa).

The N-terminal stretch at 1 to 15 (MNAIIFCLLFTTVTA) is a signal peptide. The propeptide occupies 16–56 (TYEVFGKGIEHRNEHLIINQLDIIPVESTPTPNRASRVQKR). 4 cysteine pairs are disulfide-bonded: cysteine 58–cysteine 86, cysteine 70–cysteine 99, cysteine 73–cysteine 100, and cysteine 85–cysteine 90.

This sequence belongs to the insulin family.

Its subcellular location is the secreted. This is Probable insulin-like peptide beta-type 2 (ins-2) from Caenorhabditis elegans.